The following is a 309-amino-acid chain: Probable manganese-dependent inorganic pyrophosphatase (309 aa).

Histidine 9, aspartate 13, aspartate 15, aspartate 75, histidine 97, and aspartate 149 together coordinate Mn(2+).

Belongs to the PPase class C family. Requires Mn(2+) as cofactor.

Its subcellular location is the cytoplasm. The enzyme catalyses diphosphate + H2O = 2 phosphate + H(+). The polypeptide is Probable manganese-dependent inorganic pyrophosphatase (Staphylococcus saprophyticus subsp. saprophyticus (strain ATCC 15305 / DSM 20229 / NCIMB 8711 / NCTC 7292 / S-41)).